A 394-amino-acid polypeptide reads, in one-letter code: Elongation factor Tu (394 aa).

The tr-type G domain occupies 10–204 (KPHVNVGTIG…ALDSYIPEPE (195 aa)). Residues 19 to 26 (GHVDHGKT) are G1. 19-26 (GHVDHGKT) provides a ligand contact to GTP. T26 provides a ligand contact to Mg(2+). Residues 60–64 (GITIN) are G2. The interval 81–84 (DCPG) is G3. Residues 81–85 (DCPGH) and 136–139 (NKCD) contribute to the GTP site. The segment at 136-139 (NKCD) is G4. Residues 174–176 (SAL) form a G5 region.

The protein belongs to the TRAFAC class translation factor GTPase superfamily. Classic translation factor GTPase family. EF-Tu/EF-1A subfamily. Monomer.

The protein localises to the cytoplasm. It catalyses the reaction GTP + H2O = GDP + phosphate + H(+). GTP hydrolase that promotes the GTP-dependent binding of aminoacyl-tRNA to the A-site of ribosomes during protein biosynthesis. This chain is Elongation factor Tu, found in Shewanella sp. (strain ANA-3).